The primary structure comprises 340 residues: Ketol-acid reductoisomerase (NADP(+)) (340 aa).

The KARI N-terminal Rossmann domain occupies 3-183 (INVFYDKDCN…GGGRTGIIET (181 aa)). Residues 26-29 (FGSQ), Arg-49, Ser-54, and 84-87 (DENQ) each bind NADP(+). His-109 is an active-site residue. Gly-135 provides a ligand contact to NADP(+). One can recognise a KARI C-terminal knotted domain in the interval 184 to 329 (TFKDETETDL…VKLRNMMPWI (146 aa)). Positions 192, 196, 228, and 232 each coordinate Mg(2+). Residue Ser-253 coordinates substrate.

It belongs to the ketol-acid reductoisomerase family. It depends on Mg(2+) as a cofactor.

It catalyses the reaction (2R)-2,3-dihydroxy-3-methylbutanoate + NADP(+) = (2S)-2-acetolactate + NADPH + H(+). The enzyme catalyses (2R,3R)-2,3-dihydroxy-3-methylpentanoate + NADP(+) = (S)-2-ethyl-2-hydroxy-3-oxobutanoate + NADPH + H(+). The protein operates within amino-acid biosynthesis; L-isoleucine biosynthesis; L-isoleucine from 2-oxobutanoate: step 2/4. It participates in amino-acid biosynthesis; L-valine biosynthesis; L-valine from pyruvate: step 2/4. Functionally, involved in the biosynthesis of branched-chain amino acids (BCAA). Catalyzes an alkyl-migration followed by a ketol-acid reduction of (S)-2-acetolactate (S2AL) to yield (R)-2,3-dihydroxy-isovalerate. In the isomerase reaction, S2AL is rearranged via a Mg-dependent methyl migration to produce 3-hydroxy-3-methyl-2-ketobutyrate (HMKB). In the reductase reaction, this 2-ketoacid undergoes a metal-dependent reduction by NADPH to yield (R)-2,3-dihydroxy-isovalerate. The protein is Ketol-acid reductoisomerase (NADP(+)) of Aliarcobacter butzleri (strain RM4018) (Arcobacter butzleri).